The chain runs to 208 residues: 3-demethoxyubiquinol 3-hydroxylase (208 aa).

E57, E87, H90, E139, E171, and H174 together coordinate Fe cation.

The protein belongs to the COQ7 family. It depends on Fe cation as a cofactor.

It localises to the cell membrane. It catalyses the reaction a 5-methoxy-2-methyl-3-(all-trans-polyprenyl)benzene-1,4-diol + AH2 + O2 = a 3-demethylubiquinol + A + H2O. It participates in cofactor biosynthesis; ubiquinone biosynthesis. Catalyzes the hydroxylation of 2-nonaprenyl-3-methyl-6-methoxy-1,4-benzoquinol during ubiquinone biosynthesis. This chain is 3-demethoxyubiquinol 3-hydroxylase, found in Burkholderia multivorans (strain ATCC 17616 / 249).